Reading from the N-terminus, the 80-residue chain is Translation initiation factor IF-1, chloroplastic (80 aa).

In terms of domain architecture, S1-like spans 1–74 (MKEQKWIHEG…TRGRIIYRLR (74 aa)).

Belongs to the IF-1 family. In terms of assembly, component of the 30S ribosomal translation pre-initiation complex which assembles on the 30S ribosome in the order IF-2 and IF-3, IF-1 and N-formylmethionyl-tRNA(fMet); mRNA recruitment can occur at any time during PIC assembly.

Its subcellular location is the plastid. It localises to the chloroplast. One of the essential components for the initiation of protein synthesis. Stabilizes the binding of IF-2 and IF-3 on the 30S subunit to which N-formylmethionyl-tRNA(fMet) subsequently binds. Helps modulate mRNA selection, yielding the 30S pre-initiation complex (PIC). Upon addition of the 50S ribosomal subunit IF-1, IF-2 and IF-3 are released leaving the mature 70S translation initiation complex. The sequence is that of Translation initiation factor IF-1, chloroplastic from Illicium oligandrum (Star anise).